The sequence spans 3088 residues: Protein prune homolog 2 (3088 aa).

M1 bears the N-acetylmethionine mark. Positions 109–111 match the DHH motif motif; it reads GSS. Disordered stretches follow at residues 433–468, 490–628, 673–759, 771–795, 846–909, 952–1080, 1192–1211, 1231–1371, 1413–1452, 1472–1491, 1515–1585, 1632–1698, 1741–1768, 1782–1813, 2089–2114, 2173–2215, 2240–2260, 2492–2542, 2589–2667, 2687–2710, 2814–2833, and 2841–2875; these read IRSS…GLDS, HFDL…EPAS, SSEQ…QGTN, SGRS…AAVA, SELL…PKTR, SNLG…SSYD, SDEH…NEKS, SFML…LVAS, RDVQ…GMNF, LEPE…SLDF, VKGS…QESE, DSFS…EESI, LDSS…DPWT, VEKE…KNED, ILTH…SEAK, YQAD…PDMA, QEPT…PESQ, SDLP…KNED, TQLA…SELG, ALEE…AGPD, QSEG…EIDI, and PDEA…AEEE. A compositionally biased stretch (low complexity) spans 503–512; the sequence is SGQSQQSSHS. Over residues 562-582 the composition is skewed to basic and acidic residues; that stretch reads SLVEHDEEFVQRQDSPRDNSE. 2 stretches are compositionally biased toward polar residues: residues 613 to 625 and 673 to 684; these read MNSL…STEE and SSEQESVFQSPE. Positions 685–699 are enriched in basic and acidic residues; the sequence is SWKEHKPSSIDRRAS. Polar residues predominate over residues 750-759; the sequence is LPNTSPQGTN. Positions 846-857 are enriched in polar residues; sequence SELLDNSPSEIN. Residues 865–876 show a composition bias toward basic and acidic residues; sequence WGKKNNDSRDHI. Residues 881–894 show a composition bias toward polar residues; sequence NPSSDLDHTWTNSK. Residues 895–909 show a composition bias toward basic and acidic residues; the sequence is PPKEDQNGLVDPKTR. Over residues 964 to 977 the composition is skewed to low complexity; sequence DTNYSTSDSYTSPT. Basic and acidic residues predominate over residues 980–1000; sequence GDEKETEHKPFAKEEGFESKD. Composition is skewed to polar residues over residues 1001–1027 and 1037–1048; these read GNST…SSGP and HTDNSSEINTTH. Composition is skewed to basic and acidic residues over residues 1049–1062, 1192–1208, 1282–1293, 1314–1339, and 1425–1434; these read NLDE…HTDG, SDEH…HTLN, HLDKQDTERETL, DPWK…RGHL, and QPKDTHEKHL. The span at 1436-1450 shows a compositional bias: polar residues; that stretch reads SQRNSGETTETSDGM. The segment covering 1537 to 1585 has biased composition (polar residues); sequence SSEYTHSSASSPELNDSSVALSSWGQQPSSGYQEENQGNWSEQNHQESE. Residues 1687 to 1698 are compositionally biased toward acidic residues; the sequence is SDDDSVGGEESI. Polar residues predominate over residues 1752 to 1768; the sequence is KSNPFCDNQQSSPDPWT. Composition is skewed to basic and acidic residues over residues 2516–2542 and 2604–2622; these read EKTI…KNED and NERK…DTRS. The segment covering 2623-2632 has biased composition (polar residues); the sequence is SFESPAQDQS. The segment covering 2823–2833 has biased composition (acidic residues); the sequence is DNLDSPDEIDI. The region spanning 2895–3056 is the CRAL-TRIO domain; it reads DMKVIEPYRR…SIIKLDEELR (162 aa).

This sequence belongs to the PPase class C family. Prune subfamily. As to expression, a high level of expression seen in the nervous system (brain, cerebellum and spinal cord) as well as adrenal gland. Expressed at high levels in noneuroblastoma, rhabdomyosarcoma, melanoma and some osteosarcoma cell lines, whereas at only low levels in cancer cell lines of liver, breast, thyroid and colon. Expression is significantly higher in favorable tumors than aggressive ones.

The protein localises to the cytoplasm. May play an important role in regulating differentiation, survival and aggressiveness of the tumor cells. The sequence is that of Protein prune homolog 2 (PRUNE2) from Homo sapiens (Human).